Consider the following 172-residue polypeptide: MMKLKSNQTRTYDGDGYKKRAACLCFRSESEEEVLLVSSSRHPDRWIVPGGGMEPEEEPGTAAVREVCEEAGVKGTLGRLVGIFENQERKHRTYVYVLIVTEVLEDWEDSVSIGRKREWFKIEDAINVLQCHKPVQASYFETLRQGYSANNGTPLVAPTYSVSAQSSMPGIR.

Residue M1 is modified to N-acetylmethionine. Substrate is bound by residues R10, K18–R20, and S39–R41. A Nudix hydrolase domain is found at Y17 to R144. The Mg(2+) site is built by G50 and E66. A Nudix box motif is present at residues G51–G72. E69 acts as the Proton acceptor in catalysis. E70 is a binding site for Mg(2+). Substrate is bound by residues R89 to H91, R115, and K133.

It belongs to the Nudix hydrolase family. DIPP subfamily. Monomer. Mg(2+) serves as cofactor. The cofactor is Mn(2+). Zn(2+) is required as a cofactor.

The protein localises to the cytoplasm. It localises to the nucleus. It catalyses the reaction diphospho-myo-inositol polyphosphate + H2O = myo-inositol polyphosphate + phosphate.. The catalysed reaction is 5-diphospho-1D-myo-inositol 1,2,3,4,6-pentakisphosphate + H2O = 1D-myo-inositol hexakisphosphate + phosphate + H(+). It carries out the reaction 3,5-bis(diphospho)-1D-myo-inositol 1,2,4,6-tetrakisphosphate + H2O = 3-diphospho-1D-myo-inositol 1,2,4,5,6-pentakisphosphate + phosphate + 2 H(+). The enzyme catalyses [phosphate](n+1) + n H2O = (n+1) phosphate + n H(+). It catalyses the reaction P(1),P(5)-bis(5'-adenosyl) pentaphosphate + H2O = ADP + ATP + 2 H(+). The catalysed reaction is P(1),P(6)-bis(5'-adenosyl) hexaphosphate + H2O = 2 ATP + 2 H(+). It carries out the reaction P(1),P(4)-bis(5'-adenosyl) tetraphosphate + H2O = AMP + ATP + 2 H(+). The enzyme catalyses a 5'-end (N(7)-methyl 5'-triphosphoguanosine)-ribonucleoside in mRNA + H2O = N(7)-methyl-GMP + a 5'-end diphospho-ribonucleoside in mRNA + 2 H(+). It catalyses the reaction a 5'-end (N(7)-methyl 5'-triphosphoguanosine)-ribonucleoside in mRNA + H2O = N(7)-methyl-GDP + a 5'-end phospho-ribonucleoside in mRNA + 2 H(+). Its function is as follows. Cleaves a beta-phosphate from the diphosphate groups in PP-InsP5 (diphosphoinositol pentakisphosphate) and [PP]2-InsP4 (bisdiphosphoinositol tetrakisphosphate), suggesting that it may play a role in signal transduction. InsP6 (inositol hexakisphosphate) is not a substrate. Also able to catalyze the hydrolysis of dinucleoside oligophosphates, with diadenosine 5',5'''-P1,P6-hexaphosphate (Ap6A) and diadenosine 5',5'''- P1,P5-pentaphosphate (Ap5A) being the preferred substrates. The major reaction products are ADP and p4a from Ap6A and ADP and ATP from Ap5A. Also able to hydrolyze 5- phosphoribose 1-diphosphate. Acts as a decapping enzyme that can hydrolyze both monomethylated and unmethylated capped RNAs. Hydrolyzes monomethylated capped RNA after both the alpha- and beta-phosphates generating m7GMP + ppRNA and m7GDP + pRNA. Modulates the stability of a subset of mRNAs implicated in cell motility. Divalent cations zinc, magnesium and manganese determine its substrate specificity. Exhibits diphosphoinositol polyphosphate phosphohydrolase in the presence of magnesium ions, diadenosine hexaphosphate hydrolase activity in the presence of manganese ions and endopolyphosphatase activity in the presence of zinc ions. Plays an important role in limiting DNA damage and maintaining cell survival upon oxidative stress via its endopolyphosphatase activity. The chain is Diphosphoinositol polyphosphate phosphohydrolase 1 from Bos taurus (Bovine).